We begin with the raw amino-acid sequence, 324 residues long: HTH-type transcriptional regulator CysB (324 aa).

The HTH lysR-type domain occupies 1-59 (MKLQQLRYIVEVVNHNLNVSSTAEGLYTSQPGISKQVRMLEDELGIQIFARSGKHLTQV). Residues 19-38 (VSSTAEGLYTSQPGISKQVR) constitute a DNA-binding region (H-T-H motif).

Belongs to the LysR transcriptional regulatory family. As to quaternary structure, homotetramer.

Its subcellular location is the cytoplasm. Its function is as follows. This protein is a positive regulator of gene expression for the cysteine regulon. The inducer for CysB is N-acetylserine. Thiosulfate and sulfide act as anti-inducers. This Klebsiella pneumoniae protein is HTH-type transcriptional regulator CysB (cysB).